The sequence spans 208 residues: Thymidylate kinase (208 aa).

10 to 17 (GPEGSGKT) is a binding site for ATP.

It belongs to the thymidylate kinase family.

It carries out the reaction dTMP + ATP = dTDP + ADP. In terms of biological role, phosphorylation of dTMP to form dTDP in both de novo and salvage pathways of dTTP synthesis. The chain is Thymidylate kinase from Bacillus cereus (strain B4264).